A 496-amino-acid chain; its full sequence is Cytochrome P450 71AV8 (496 aa).

Residues 3–23 (ISIPTTLGLAVIIFIIFKLLT) form a helical membrane-spanning segment. C432 lines the heme pocket.

It belongs to the cytochrome P450 family. Requires heme as cofactor.

It is found in the membrane. Its function is as follows. Valencene oxidase, which preferentially hydroylates the C2 position of (+)-valencene in the trans-orientation, producing trans-nootkatol that can be further oxidized to (+)-nootkatone. Can also catalyze the three-step conversion of germacrene A to germacra-1(10),4,11(13)-trien-12-oic acid and the partial conversion of the non-natural substrate amorpha-4,11-diene into artemisinic alcohol and artemisinic aldehyde. The polypeptide is Cytochrome P450 71AV8 (CYP71AV8) (Cichorium intybus (Chicory)).